Reading from the N-terminus, the 119-residue chain is Ergochrome gene cluster protein CPUR_05426 (119 aa).

It functions in the pathway pigment biosynthesis. Its function is as follows. Part of the ergochrome gene cluster responsible for the typical purple-black color of the ergot sclerotia. The ergochrome gene cluster produces several ergot pigments including the yellow ergochrome secalonic acid and its derivatives, as well as the red anthraquinones endocrocin and clavorubin. The pathway begins with the synthesis of atrochrysone thioester by the polyketide synthase (PKS) CPUR_05437. The atrochrysone carboxyl ACP thioesterase CPUR_05436 then breaks the thioester bond and releases the atrochrysone carboxylic acid from CPUR_05437. The atrochrysone carboxylic acid is then converted to atrochrysone which is further transformed into emodin anthrone. The next step is performed by the anthrone oxygenase CPUR_05434 that catalyzes the oxidation of emodinanthrone to emodin. Emodin is further modified to yield monodictyphenone via several steps involving CPUR_05427, CPUR_05428, CPUR_05429 and CPUR_05430. The short chain dehydrogenase/reductase CPUR_05418 then catalyzes the C-5 ketoreduction to give the xanthone skeleton of the monomeric units. Ergochromes formation requires further dimerization steps of different xanthone units, probably catalyzed by the cytochrome P450 monooxygenase CPUR_05419. CPUR_05425, CPUR_05426 and CPUR_05431 are unique to Claviceps, thus it is likely that they are involved in further modification of xanthone units or in their dimerization. The yellow ergochromes and the red anthraquinone pigments endocrocin and clavorubin are products from the same PKS derived precursors and the latter are likely shunt products in the pathway of xanthone biosynthesis. It is proposed that atrochrysone carboxylic acid released from the PKS CPUR_05437 can also be converted to endocrocin anthrone which is further oxidized into endocrocin by CPUR_05435. Endocrocin could be then modified to clavorubin, possibly by CPUR_05423 and CPUR_05431. Clavorubin is the principal anthraquinone metabolite produced by the cluster with a much higher yield compared to endocrocin. The chain is Ergochrome gene cluster protein CPUR_05426 from Claviceps purpurea (strain 20.1) (Ergot fungus).